The primary structure comprises 322 residues: MPGNSRRRGAVRKSGTKKGAGVGSGGQRRRGLEGRGPTPPAHLRPHHPAAKRARAQPRRPVKRADETETVLGRNPVLECLRAGVPATALYVALGTEADERLTECVARAADSGIAIVELLRADLDRMTANHLHQGIALQVPPYNYAHPDDLLAAALDQPPALLVALDNLSDPRNLGAIVRSVAAFGGHGVLIPQRRSASVTAVAWRTSAGAAARIPVARATNLTRTLKGWADRGVRVIGLDAGGGTALDDVDGTDSLVVVVGSEGKGLSRLVRQNCDEVVSIPMAAQAESLNASVAAGVVLAAIARQRRRPREPREQTQNRMI.

Basic residues-rich tracts occupy residues 1–16 and 43–61; these read MPGNSRRRGAVRKSGT and LRPHHPAAKRARAQPRRPV. The tract at residues 1–69 is disordered; that stretch reads MPGNSRRRGA…PVKRADETET (69 aa). S-adenosyl-L-methionine is bound by residues glycine 261, isoleucine 281, and leucine 290.

The protein belongs to the class IV-like SAM-binding methyltransferase superfamily. RNA methyltransferase TrmH family.

This is an uncharacterized protein from Mycobacterium bovis (strain BCG / Pasteur 1173P2).